The following is a 456-amino-acid chain: Sulfoacetaldehyde dehydrogenase (456 aa).

213-218 (GGTAAA) is an NAD(+) binding site. Residues glutamate 233 and cysteine 267 contribute to the active site.

This sequence belongs to the aldehyde dehydrogenase family. In terms of assembly, homotetramer.

It catalyses the reaction sulfoacetaldehyde + NAD(+) + H2O = sulfoacetate + NADH + 2 H(+). Functionally, mediates conversion of 2-sulfoacetaldehyde into sulfoacetate. The enzyme is specific for NAD; NADP is not a substrate. Part of a pathway that can utilize the amino group of taurine as a sole source of nitrogen for growth. This chain is Sulfoacetaldehyde dehydrogenase (safD), found in Neptuniibacter caesariensis.